The following is a 195-amino-acid chain: PABIR family member 1 (195 aa).

Belongs to the FAM122 family.

In Homo sapiens (Human), this protein is PABIR family member 1.